The chain runs to 338 residues: S-adenosylmethionine:tRNA ribosyltransferase-isomerase (338 aa).

Belongs to the QueA family. Monomer.

It is found in the cytoplasm. It carries out the reaction 7-aminomethyl-7-carbaguanosine(34) in tRNA + S-adenosyl-L-methionine = epoxyqueuosine(34) in tRNA + adenine + L-methionine + 2 H(+). It functions in the pathway tRNA modification; tRNA-queuosine biosynthesis. In terms of biological role, transfers and isomerizes the ribose moiety from AdoMet to the 7-aminomethyl group of 7-deazaguanine (preQ1-tRNA) to give epoxyqueuosine (oQ-tRNA). The polypeptide is S-adenosylmethionine:tRNA ribosyltransferase-isomerase (Francisella tularensis subsp. holarctica (strain FTNF002-00 / FTA)).